An 802-amino-acid chain; its full sequence is Elongation factor G, mitochondrial (802 aa).

The transit peptide at 1–24 directs the protein to the mitochondrion; it reads MRYPSLARLPRRALSGLARAPVRL. Residues 100 to 387 enclose the tr-type G domain; sequence SRVRNIGIAA…GVIDYLPNPS (288 aa). Residues 109 to 116, 185 to 189, and 239 to 242 contribute to the GTP site; these read AHIDSGKT, DTPGH, and NKMD.

It belongs to the TRAFAC class translation factor GTPase superfamily. Classic translation factor GTPase family. EF-G/EF-2 subfamily.

The protein localises to the mitochondrion. It participates in protein biosynthesis; polypeptide chain elongation. In terms of biological role, mitochondrial GTPase that catalyzes the GTP-dependent ribosomal translocation step during translation elongation. During this step, the ribosome changes from the pre-translocational (PRE) to the post-translocational (POST) state as the newly formed A-site-bound peptidyl-tRNA and P-site-bound deacylated tRNA move to the P and E sites, respectively. Catalyzes the coordinated movement of the two tRNA molecules, the mRNA and conformational changes in the ribosome. The sequence is that of Elongation factor G, mitochondrial (mef1) from Aspergillus terreus (strain NIH 2624 / FGSC A1156).